Reading from the N-terminus, the 853-residue chain is DNA (cytosine-5)-methyltransferase 3B (853 aa).

Over residues 1–20 (MKGDTRHLNGEEDAGGREDS) the composition is skewed to basic and acidic residues. The disordered stretch occupies residues 1–218 (MKGDTRHLNG…SGDGDSSEYQ (218 aa)). The tract at residues 1-298 (MKGDTRHLNG…LATFNKLVSY (298 aa)) is interaction with DNMT1 and DNMT3A. Residues 72–81 (GDGDGEDGDG) are compositionally biased toward acidic residues. Ser-82 carries the phosphoserine modification. Lys-89 is covalently cross-linked (Glycyl lysine isopeptide (Lys-Gly) (interchain with G-Cter in SUMO2)). At Thr-96 the chain carries Phosphothreonine. Phosphoserine occurs at positions 100 and 110. Residues 115 to 130 (ERHRPSPRSTRGRQGR) are compositionally biased toward basic residues. A phosphoserine mark is found at Ser-136, Ser-195, Ser-202, and Ser-209. Residues 179–199 (GTPQSSSTPYARLAQDSQQGG) are compositionally biased toward polar residues. Residues 225-283 (IGDLVWGKIKGFSWWPAMVVSWKATSKRQAMSGMRWVQWFGDGKFSEVSADKLVALGLF) form the PWWP domain. The disordered stretch occupies residues 341-423 (KPTGIEGLKP…DQSREQMASD (83 aa)). 2 stretches are compositionally biased toward basic and acidic residues: residues 368–385 (RKLE…RTAD) and 407–417 (GKDRGDEDQSR). Citrulline is present on Arg-410. Positions 423-555 (DVANNKSSLE…LQAFFTSDTG (133 aa)) constitute an ADD domain. The GATA-type; atypical zinc-finger motif lies at 434 to 464 (GCLSCGRKNPVSFHPLFEGGLCQTCRDRFLE). The segment at 435 to 527 (CLSCGRKNPV…LQEPWSCYMC (93 aa)) is interaction with the PRC2/EED-EZH2 complex. The PHD-type; atypical zinc finger occupies 475–531 (QSYCTVCCEGRELLLCSNTSCCRCFCVECLEVLVGTGTAAEAKLQEPWSCYMCLPQR). Residues 575-853 (IRVLSLFDGI…APLKDYFACE (279 aa)) enclose the SAM-dependent MTase C5-type domain. S-adenosyl-L-methionine is bound by residues 582–586 (DGIAT) and Glu-605. Residue Lys-617 forms a Glycyl lysine isopeptide (Lys-Gly) (interchain with G-Cter in SUMO2) linkage. S-adenosyl-L-methionine is bound at residue 627 to 629 (DVR). Cys-651 is an active-site residue. 832-834 (RSW) is a binding site for S-adenosyl-L-methionine.

It belongs to the class I-like SAM-binding methyltransferase superfamily. C5-methyltransferase family. In terms of assembly, interacts with BAZ2A/TIP5, SUV39H1 and CBX4. Interacts with UHRF1. Interacts with DNMT1 and DNMT3A, SETDB1, UBL1, UBE2I9 and ZHX1. Interacts with the PRC2/EED-EZH2 complex. In terms of processing, sumoylated. Citrullinated by PADI4. As to expression, ubiquitous; highly expressed in fetal liver, heart, kidney, placenta, and at lower levels in spleen, colon, brain, liver, small intestine, lung, peripheral blood mononuclear cells, and skeletal muscle. Isoform 1 is expressed in all tissues except brain, skeletal muscle and PBMC, 3 is ubiquitous, 4 is expressed in all tissues except brain, skeletal muscle, lung and prostate and 5 is detectable only in testis and at very low level in brain and prostate.

The protein resides in the nucleus. The enzyme catalyses a 2'-deoxycytidine in DNA + S-adenosyl-L-methionine = a 5-methyl-2'-deoxycytidine in DNA + S-adenosyl-L-homocysteine + H(+). Activated by binding to the regulatory factor DNMT3L. In terms of biological role, required for genome-wide de novo methylation and is essential for the establishment of DNA methylation patterns during development. DNA methylation is coordinated with methylation of histones. May preferentially methylates nucleosomal DNA within the nucleosome core region. May function as transcriptional co-repressor by associating with CBX4 and independently of DNA methylation. Seems to be involved in gene silencing. In association with DNMT1 and via the recruitment of CTCFL/BORIS, involved in activation of BAG1 gene expression by modulating dimethylation of promoter histone H3 at H3K4 and H3K9. Isoforms 4 and 5 are probably not functional due to the deletion of two conserved methyltransferase motifs. Functions as a transcriptional corepressor by associating with ZHX1. Required for DUX4 silencing in somatic cells. This chain is DNA (cytosine-5)-methyltransferase 3B (DNMT3B), found in Homo sapiens (Human).